The sequence spans 414 residues: Protein DNA-DAMAGE INDUCIBLE 1 (414 aa).

The region spanning 1-76 (MRITVMTAGE…LMMMVSNASS (76 aa)) is the Ubiquitin-like domain. One can recognise a Peptidase A2 domain in the interval 213 to 292 (LKAFVDSGAQ…NMEFLFGLDM (80 aa)). The active site involves D218. Positions 332–374 (ERVPNDASSSGATVPSGFTEKKNNTVANPTSQQPKRQNTSEGP) are disordered. Residues 355–372 (NTVANPTSQQPKRQNTSE) are compositionally biased toward polar residues. One can recognise a UBA domain in the interval 374–414 (PEFEAKIAKLVELGFSRDSVIQALKLFEGNEEQAAGFLFGG).

The protein belongs to the DDI1 family. As to quaternary structure, homodimer.

The protein localises to the cytoplasm. It localises to the cytosol. Functionally, receptor of ubiquitinated protein targeted to ubiquitin/proteasome-mediated proteolysis (UPP). Relatively weak affinity for both 'Lys-48'- and 'Lys-63'-linked ubiquitin chains with a slight preference for 'Lys-48-'linked chains of three or more ubiquitin units. This is Protein DNA-DAMAGE INDUCIBLE 1 from Arabidopsis thaliana (Mouse-ear cress).